We begin with the raw amino-acid sequence, 87 residues long: Small ribosomal subunit protein bS16 (87 aa).

This sequence belongs to the bacterial ribosomal protein bS16 family.

In Fusobacterium nucleatum subsp. nucleatum (strain ATCC 25586 / DSM 15643 / BCRC 10681 / CIP 101130 / JCM 8532 / KCTC 2640 / LMG 13131 / VPI 4355), this protein is Small ribosomal subunit protein bS16.